The chain runs to 560 residues: Flagellar M-ring protein (560 aa).

A helical membrane pass occupies residues 26 to 46 (IPLIVAGSAAVAIVVAMVLWA). The interval 304–372 (VGAGYPGGVP…TSNYEVDRTI (69 aa)) is disordered. A compositionally biased stretch (low complexity) spans 331–353 (PPTNQQNAQNTPQTSTSTNSNSA). Polar residues predominate over residues 354-366 (GPRSTQRNETSNY). A helical membrane pass occupies residues 455 to 475 (FIDQLLAAGRWLLVLVVAWIL).

This sequence belongs to the FliF family. The basal body constitutes a major portion of the flagellar organelle and consists of four rings (L,P,S, and M) mounted on a central rod. The M ring is integral to the inner membrane of the cell and may be connected to the flagellar rod via the S ring. The S (supramembrane ring) lies just distal to the M ring. The L and P rings lie in the outer membrane and the periplasmic space, respectively.

The protein resides in the cell inner membrane. It localises to the bacterial flagellum basal body. The M ring may be actively involved in energy transduction. This Salmonella typhimurium (strain LT2 / SGSC1412 / ATCC 700720) protein is Flagellar M-ring protein (fliF).